A 118-amino-acid chain; its full sequence is Small ribosomal subunit protein uS13 (118 aa).

The interval 94 to 118 is disordered; the sequence is GLPVRGQRTQTNARTRKGPRRLARK. Residues 107–118 show a composition bias toward basic residues; sequence RTRKGPRRLARK.

This sequence belongs to the universal ribosomal protein uS13 family. In terms of assembly, part of the 30S ribosomal subunit. Forms a loose heterodimer with protein S19. Forms two bridges to the 50S subunit in the 70S ribosome.

Located at the top of the head of the 30S subunit, it contacts several helices of the 16S rRNA. In the 70S ribosome it contacts the 23S rRNA (bridge B1a) and protein L5 of the 50S subunit (bridge B1b), connecting the 2 subunits; these bridges are implicated in subunit movement. Contacts the tRNAs in the A and P-sites. This is Small ribosomal subunit protein uS13 from Nitrosococcus oceani (strain ATCC 19707 / BCRC 17464 / JCM 30415 / NCIMB 11848 / C-107).